Consider the following 400-residue polypeptide: Putative niacin/nicotinamide transporter NiaP (400 aa).

The Cytoplasmic portion of the chain corresponds to 1-14 (MGKQQPISQRKLLG). The chain crosses the membrane as a helical span at residues 15 to 35 (VAGLGWLFDAMDVGILSFIIA). Residues 36-49 (ALHVEWNLSPEEMK) lie on the Extracellular side of the membrane. The chain crosses the membrane as a helical span at residues 50 to 70 (WIGSVNSIGMAAGAFLFGLLA). Residues 71-77 (DRIGRKK) lie on the Cytoplasmic side of the membrane. 2 helical membrane-spanning segments follow: residues 78–98 (VFIITLLCFSIGSGISAFVTS) and 99–119 (LSAFLILRFVIGMGLGGELPV). The Cytoplasmic portion of the chain corresponds to 120–142 (ASTLVSEAVVPEKRGRVIVLLES). A helical transmembrane segment spans residues 143–163 (FWAVGWLAAALISYFVIPSFG). Residues 164-165 (WQ) are Extracellular-facing. A helical transmembrane segment spans residues 166-186 (AALLLTALTAFYALYLRTSLP). Topologically, residues 187 to 217 (DSPKYESLSAKKRSMWENVKSVWARQYIRPT) are cytoplasmic. A helical transmembrane segment spans residues 218 to 238 (VMLSIVWFCVVFSYYGMFLWL). At 239-253 (PSVMLLKGFSMIQSF) the chain is on the extracellular side. The helical transmembrane segment at 254 to 274 (EYVLLMTLAQLPGYFSAAWLI) threads the bilayer. The Cytoplasmic portion of the chain corresponds to 275 to 280 (EKAGRK). The chain crosses the membrane as a helical span at residues 281-301 (WILVVYLIGTAGSAYFFGTAD). Topologically, residues 302-304 (SLS) are extracellular. A helical transmembrane segment spans residues 305–325 (LLLTAGVLLSFFNLGAWGVLY). The Cytoplasmic portion of the chain corresponds to 326–343 (AYTPEQYPTAIRATGSGT). Residues 344 to 364 (TAAFGRIGGIFGPLLVGTLAA) form a helical membrane-spanning segment. Over 365 to 370 (RHISFS) the chain is Extracellular. A helical transmembrane segment spans residues 371–391 (VIFSIFCIAILLAVACILIMG). The Cytoplasmic segment spans residues 392–400 (KETKQTELE).

This sequence belongs to the major facilitator superfamily. Sugar transporter (TC 2.A.1.1) family.

It is found in the cell membrane. In terms of biological role, probably involved in the uptake of amidated and deamidated forms of niacin. Increases the growth rate of E.coli that is unable to make niacin de novo; confers increased sensitivity to the toxic niacin analog 6-amino-nicotinamide to wild-type E.coli. There is probably another mechanism for niacin uptake. This is Putative niacin/nicotinamide transporter NiaP from Bacillus subtilis (strain 168).